A 151-amino-acid polypeptide reads, in one-letter code: uncharacterized protein (151 aa).

This is an uncharacterized protein from Saccharomyces cerevisiae (strain ATCC 204508 / S288c) (Baker's yeast).